We begin with the raw amino-acid sequence, 209 residues long: Na(+)-translocating NADH-quinone reductase subunit D (209 aa).

Helical transmembrane passes span 42 to 62, 66 to 86, 103 to 123, 131 to 151, and 178 to 198; these read LVMT…ISLI, IPNS…VIVV, VFVG…AYAM, FMDG…VGFV, and NGLF…IWGL.

The protein belongs to the NqrDE/RnfAE family. As to quaternary structure, composed of six subunits; NqrA, NqrB, NqrC, NqrD, NqrE and NqrF.

Its subcellular location is the cell inner membrane. It catalyses the reaction a ubiquinone + n Na(+)(in) + NADH + H(+) = a ubiquinol + n Na(+)(out) + NAD(+). Functionally, NQR complex catalyzes the reduction of ubiquinone-1 to ubiquinol by two successive reactions, coupled with the transport of Na(+) ions from the cytoplasm to the periplasm. NqrA to NqrE are probably involved in the second step, the conversion of ubisemiquinone to ubiquinol. This Yersinia pseudotuberculosis serotype O:1b (strain IP 31758) protein is Na(+)-translocating NADH-quinone reductase subunit D.